Reading from the N-terminus, the 513-residue chain is ATP synthase subunit alpha (513 aa).

An ATP-binding site is contributed by 169–176 (GDRQTGKT).

Belongs to the ATPase alpha/beta chains family. In terms of assembly, F-type ATPases have 2 components, CF(1) - the catalytic core - and CF(0) - the membrane proton channel. CF(1) has five subunits: alpha(3), beta(3), gamma(1), delta(1), epsilon(1). CF(0) has three main subunits: a(1), b(2) and c(9-12). The alpha and beta chains form an alternating ring which encloses part of the gamma chain. CF(1) is attached to CF(0) by a central stalk formed by the gamma and epsilon chains, while a peripheral stalk is formed by the delta and b chains.

It localises to the cell inner membrane. It carries out the reaction ATP + H2O + 4 H(+)(in) = ADP + phosphate + 5 H(+)(out). Functionally, produces ATP from ADP in the presence of a proton gradient across the membrane. The alpha chain is a regulatory subunit. This chain is ATP synthase subunit alpha, found in Nitrosomonas europaea (strain ATCC 19718 / CIP 103999 / KCTC 2705 / NBRC 14298).